Consider the following 584-residue polypeptide: 4-hydroxybenzoate decarboxylase subunit C (584 aa).

Belongs to the UbiD family. As to quaternary structure, component of the decarboxylase complex composed of the subunits B and C (Potential). The subunit D usually found in other organisms seems to be absent.

The catalysed reaction is 4-hydroxybenzoate + H(+) = phenol + CO2. With respect to regulation, the enzyme activity is enhanced by Mg(2+), Fe(2+), Mn(2+) and Ca(2+). No stimulation is observed with Cu(2+) and Zn(2+). Its function is as follows. Catalyzes the reversible decarboxylation of 4-hydroxybenzoate. This Chlamydia pneumoniae (Chlamydophila pneumoniae) protein is 4-hydroxybenzoate decarboxylase subunit C.